A 984-amino-acid polypeptide reads, in one-letter code: Pre-mRNA-splicing factor cwf10 (984 aa).

The disordered stretch occupies residues 1-28; it reads MMEEDLYDEFGNYIGPENEEDEEELFPQ. The tr-type G domain occupies 139–402; the sequence is DDVRSFIVAG…HTLTISDEAE (264 aa). Positions 148-155 are G1; that stretch reads GHLHHGKS. 148–155 is a GTP binding site; the sequence is GHLHHGKS. A G2 region spans residues 190 to 194; that stretch reads VMSIK. Residues 216 to 219 form a G3 region; the sequence is DTPG. GTP-binding positions include 216–220 and 270–273; these read DTPGH and NKVD. Positions 270 to 273 are G4; it reads NKVD. Residues 371–373 form a G5 region; that stretch reads QSL.

It belongs to the TRAFAC class translation factor GTPase superfamily. Classic translation factor GTPase family. EF-G/EF-2 subfamily. Belongs to the 40S cdc5-associated complex (or cwf complex), a spliceosome sub-complex reminiscent of a late-stage spliceosome composed of the U2, U5 and U6 snRNAs and at least brr2, cdc5, cwf2/prp3, cwf3/syf1, cwf4/syf3, cwf5/ecm2, spp42/cwf6, cwf7/spf27, cwf8, cwf9, cwf10, cwf11, cwf12, prp45/cwf13, cwf14, cwf15, cwf16, cwf17, cwf18, cwf19, cwf20, cwf21, cwf22, cwf23, cwf24, cwf25, cwf26, cyp7/cwf27, cwf28, cwf29/ist3, lea1, msl1, prp5/cwf1, prp10, prp12/sap130, prp17, prp22, sap61, sap62, sap114, sap145, slu7, smb1, smd1, smd3, smf1, smg1 and syf2.

The protein localises to the cytoplasm. It is found in the nucleus. Functionally, component of the U5 snRNP complex required for pre-mRNA splicing. Binds GTP. This Schizosaccharomyces pombe (strain 972 / ATCC 24843) (Fission yeast) protein is Pre-mRNA-splicing factor cwf10 (cwf10).